We begin with the raw amino-acid sequence, 197 residues long: Imidazoleglycerol-phosphate dehydratase (197 aa).

Belongs to the imidazoleglycerol-phosphate dehydratase family.

It localises to the cytoplasm. It carries out the reaction D-erythro-1-(imidazol-4-yl)glycerol 3-phosphate = 3-(imidazol-4-yl)-2-oxopropyl phosphate + H2O. It functions in the pathway amino-acid biosynthesis; L-histidine biosynthesis; L-histidine from 5-phospho-alpha-D-ribose 1-diphosphate: step 6/9. This Azorhizobium caulinodans (strain ATCC 43989 / DSM 5975 / JCM 20966 / LMG 6465 / NBRC 14845 / NCIMB 13405 / ORS 571) protein is Imidazoleglycerol-phosphate dehydratase.